We begin with the raw amino-acid sequence, 1016 residues long: Probably inactive leucine-rich repeat receptor-like protein kinase At3g28040 (1016 aa).

The N-terminal stretch at 1 to 26 (MGKQRRTMISFTLFLTLTMMSSLING) is a signal peptide. The Extracellular portion of the chain corresponds to 27-646 (DTDSIQLNDD…FHRRMFLSVS (620 aa)). 20 LRR repeats span residues 102-124 (RLKV…SNNN), 125-147 (HLQK…LGSI), 149-171 (SLQH…LFNN), 174-196 (SLRY…LFRC), 198-219 (VLNS…VSGI), 224-245 (RLRA…GILS), 248-270 (NLKE…IGLC), 272-295 (HLNR…QKLK), 296-318 (SLNH…IGDM), 320-342 (GLVH…ISNL), 344-366 (SLKD…LESC), 368-390 (ELMI…FFDL), 391-413 (GLQE…SSRL), 416-438 (SLIR…VGLF), 440-462 (HMRY…IEFL), 464-486 (NLTV…ICES), 488-510 (SLQI…IGNC), 512-535 (SLKL…SNLQ), 536-559 (ELKI…GDLQ), and 560-582 (NLLL…DVFQ). 3 N-linked (GlcNAc...) asparagine glycosylation sites follow: N112, N135, and N171. N-linked (GlcNAc...) asparagine glycosylation occurs at N203. N349 carries an N-linked (GlcNAc...) asparagine glycan. Residues N445, N464, N509, and N522 are each glycosylated (N-linked (GlcNAc...) asparagine). A glycan (N-linked (GlcNAc...) asparagine) is linked at N565. Residues 647–667 (VIVAISAAILIFSGVIIITLL) traverse the membrane as a helical segment. Residues 668–1016 (NASVRRRLAF…PVPHRIMDSF (349 aa)) lie on the Cytoplasmic side of the membrane. The Protein kinase domain occupies 726-1013 (LNKASRIGEG…INSPVPHRIM (288 aa)). Residues 732–740 (IGEGVFGTV) and K755 contribute to the ATP site. Phosphotyrosine occurs at positions 841 and 898.

It belongs to the protein kinase superfamily. Ser/Thr protein kinase family.

Its subcellular location is the membrane. The sequence is that of Probably inactive leucine-rich repeat receptor-like protein kinase At3g28040 from Arabidopsis thaliana (Mouse-ear cress).